Here is a 691-residue protein sequence, read N- to C-terminus: Histone-lysine N-methyltransferase Set8 (691 aa).

Positions 1–29 are disordered; the sequence is MIMVRRRQRPAKEAASSSSGGASSGSGIP. Over residues 14–27 the composition is skewed to low complexity; that stretch reads AASSSSGGASSGSG. Phosphoserine is present on residues serine 195 and serine 250. Phosphothreonine is present on threonine 252. Serine 281 is subject to Phosphoserine. Disordered regions lie at residues 341–363, 382–401, 407–437, and 464–516; these read TANT…HRIL, GSAD…TTTA, KSRR…QQQQ, and AEER…ATNG. Threonine 344 carries the post-translational modification Phosphothreonine. Residues serine 346, serine 383, serine 388, and serine 392 each carry the phosphoserine modification. 2 stretches are compositionally biased toward polar residues: residues 421–430 and 471–481; these read YQPQLQKPPS and NKAPATANSNK. The SET domain maps to 555–676; sequence DGLQVRHFMG…PGEELTYDYG (122 aa). S-adenosyl-L-methionine contacts are provided by residues 565–567, tyrosine 610, and 637–638; these read KGR and NH.

This sequence belongs to the class V-like SAM-binding methyltransferase superfamily. Histone-lysine methyltransferase family. PR/SET subfamily.

Its subcellular location is the nucleus. It localises to the chromosome. It carries out the reaction L-lysyl(20)-[histone H4] + S-adenosyl-L-methionine = N(6)-methyl-L-lysyl(20)-[histone H4] + S-adenosyl-L-homocysteine + H(+). In terms of biological role, histone methyltransferase that specifically monomethylates 'Lys-20' of histone H4. H4 'Lys-20' monomethylation is enriched during mitosis and represents a specific tag for epigenetic transcriptional repression. Mainly functions in euchromatin regions, thereby playing a central role in the silencing of euchromatic genes. Required for cell proliferation, possibly by contributing to the maintenance of proper higher-order structure of DNA and chromosome condensation during mitosis. The protein is Histone-lysine N-methyltransferase Set8 of Drosophila melanogaster (Fruit fly).